A 601-amino-acid chain; its full sequence is Translation initiation factor IF-2 (601 aa).

Positions G54–E101 are disordered. The span at A57–T89 shows a compositional bias: low complexity. The 170-residue stretch at H104–R273 folds into the tr-type G domain. Positions G113–T120 are G1. A GTP-binding site is contributed by G113–T120. A G2 region spans residues G138–H142. The segment at D159–G162 is G3. GTP is bound by residues D159–H163 and N213–D216. Residues N213 to D216 form a G4 region. The G5 stretch occupies residues S249–K251.

Belongs to the TRAFAC class translation factor GTPase superfamily. Classic translation factor GTPase family. IF-2 subfamily.

The protein resides in the cytoplasm. In terms of biological role, one of the essential components for the initiation of protein synthesis. Protects formylmethionyl-tRNA from spontaneous hydrolysis and promotes its binding to the 30S ribosomal subunits. Also involved in the hydrolysis of GTP during the formation of the 70S ribosomal complex. This Deinococcus geothermalis (strain DSM 11300 / CIP 105573 / AG-3a) protein is Translation initiation factor IF-2.